The chain runs to 302 residues: 1D-myo-inositol 2-acetamido-2-deoxy-alpha-D-glucopyranoside deacetylase (302 aa).

Zn(2+) is bound by residues H13, D16, and H155.

Belongs to the MshB deacetylase family. Zn(2+) serves as cofactor.

The catalysed reaction is 1D-myo-inositol 2-acetamido-2-deoxy-alpha-D-glucopyranoside + H2O = 1D-myo-inositol 2-amino-2-deoxy-alpha-D-glucopyranoside + acetate. Catalyzes the deacetylation of 1D-myo-inositol 2-acetamido-2-deoxy-alpha-D-glucopyranoside (GlcNAc-Ins) in the mycothiol biosynthesis pathway. The sequence is that of 1D-myo-inositol 2-acetamido-2-deoxy-alpha-D-glucopyranoside deacetylase from Nocardioides sp. (strain ATCC BAA-499 / JS614).